The chain runs to 215 residues: 3-demethoxyubiquinol 3-hydroxylase (215 aa).

Fe cation is bound by residues glutamate 64, glutamate 94, histidine 97, glutamate 146, glutamate 178, and histidine 181.

This sequence belongs to the COQ7 family. Fe cation is required as a cofactor.

The protein localises to the cell membrane. The catalysed reaction is a 5-methoxy-2-methyl-3-(all-trans-polyprenyl)benzene-1,4-diol + AH2 + O2 = a 3-demethylubiquinol + A + H2O. Its pathway is cofactor biosynthesis; ubiquinone biosynthesis. In terms of biological role, catalyzes the hydroxylation of 2-nonaprenyl-3-methyl-6-methoxy-1,4-benzoquinol during ubiquinone biosynthesis. This chain is 3-demethoxyubiquinol 3-hydroxylase, found in Coxiella burnetii (strain RSA 331 / Henzerling II).